The primary structure comprises 464 residues: Tryprostatin B synthase (464 aa).

Brevianamide F contacts are provided by M94 and E102. Dimethylallyl diphosphate contacts are provided by R113, K201, and Y203. Y205 lines the brevianamide F pocket. Dimethylallyl diphosphate is bound by residues K294, Y296, Q380, Y382, Y446, and Y450.

It belongs to the tryptophan dimethylallyltransferase family.

It catalyses the reaction brevianamide F + dimethylallyl diphosphate = tryprostatin B + diphosphate. It participates in mycotoxin biosynthesis. Functionally, brevianamide F prenyltransferase; part of the gene cluster that mediates the biosynthesis of fumitremorgins, indole alkaloids that carry not only intriguing chemical structures, but also interesting biological and pharmacological activities. The biosynthesis of fumitremorgin-type alkaloids begins by condensation of the two amino acids L-tryptophan and L-proline to brevianamide F, catalyzed by the non-ribosomal peptide synthetase ftmA. Brevianamide F is then prenylated by the prenyltransferase ftmPT1/ftmB in the presence of dimethylallyl diphosphate, resulting in the formation of tryprostatin B. The three cytochrome P450 monooxygenases, ftmP450-1/ftmC, ftmP450-2/ftmE and ftmP450-3/FtmG, are responsible for the conversion of tryprostatin B to 6-hydroxytryprostatin B, tryprostatin A to fumitremorgin C and fumitremorgin C to 12,13-dihydroxyfumitremorgin C, respectively. The putative methyltransferase ftmMT/ftmD is expected for the conversion of 6-hydroxytryprostatin B to tryprostatin A. FtmPT2/FtmH catalyzes the prenylation of 12,13-dihydroxyfumitre-morgin C in the presence of dimethylallyl diphosphate, resulting in the formation of fumitremorgin B. Fumitremorgin B is further converted to verruculogen by ftmOx1/ftmF via the insertion of an endoperoxide bond between the two prenyl moieties. In some fungal species, verruculogen is further converted to fumitremorgin A, but the enzymes involved in this step have not been identified yet. This is Tryprostatin B synthase from Aspergillus fumigatus (Neosartorya fumigata).